Reading from the N-terminus, the 262-residue chain is Abhydrolase domain-containing protein AFT2-1 (262 aa).

The Peroxisomal targeting signal type 1 motif lies at Ser260–Leu262.

This sequence belongs to the AB hydrolase superfamily. AKT2 hydrolase family.

Its subcellular location is the peroxisome. It participates in mycotoxin biosynthesis. Its function is as follows. Abhydrolase domain-containing protein; part of the gene clusters that mediate the biosynthesis of the host-selective toxins (HSTs) AF-toxins responsible for Alternaria black spot of strawberry disease by the strawberry pathotype. AF-toxin I and III are valine derivatives of 2,3-dyhydroxy-isovaleric acid and 2-hydroxy-isovaleric acid respectively, while AF II is an isoleucine derivative of 2-hydroxy-valeric acid. These derivatives are bound to a 9,10-epoxy-8-hydroxy-9-methyl-decatrienoic acid (EDA) moiety. On cellular level, AF-toxins affect plasma membrane of susceptible cells and cause a sudden increase in loss of K(+) after a few minutes of toxin treatment. The aldo-keto reductase AFTS1 catalyzes the conversion of 2-keto-isovaleric acid (2-KIV) to 2-hydroxy-isovaleric acid (2-HIV) by reduction of its ketone to an alcohol. The acyl-CoA ligase AFT1, the hydrolase AFT2 and the enoyl-CoA hydratases AFT3 and AFT6, but also the polyketide synthase AFT9, the acyl-CoA dehydrogenase AFT10, the cytochrome P450 monooxygenase AFT11 and the oxidoreductase AFT12 are all involved in the biosynthesis of the AK-, AF- and ACT-toxin common EDA structural moiety. The exact function of each enzyme, and of additional enzymes identified within the AF-toxin clusters have still to be determined. The sequence is that of Abhydrolase domain-containing protein AFT2-1 from Alternaria alternata (Alternaria rot fungus).